A 202-amino-acid chain; its full sequence is Imidazoleglycerol-phosphate dehydratase (202 aa).

This sequence belongs to the imidazoleglycerol-phosphate dehydratase family.

The protein localises to the cytoplasm. The catalysed reaction is D-erythro-1-(imidazol-4-yl)glycerol 3-phosphate = 3-(imidazol-4-yl)-2-oxopropyl phosphate + H2O. Its pathway is amino-acid biosynthesis; L-histidine biosynthesis; L-histidine from 5-phospho-alpha-D-ribose 1-diphosphate: step 6/9. This Chelativorans sp. (strain BNC1) protein is Imidazoleglycerol-phosphate dehydratase.